The sequence spans 354 residues: Multiple sugar-binding periplasmic receptor ChvE (354 aa).

The N-terminal stretch at 1–25 (MKSIISLTAAAAIGVAMFVAPAFAA) is a signal peptide.

The protein belongs to the bacterial solute-binding protein 2 family.

Its subcellular location is the periplasm. In terms of biological role, required for effective transcriptional induction of the vir genes by monosaccharides in response to plant signals and for normal growth and chemotaxis towards certain sugars. Functions as a periplasmic multiple sugar-binding receptor protein. It does not interact with a transport system. The protein is Multiple sugar-binding periplasmic receptor ChvE (chvE) of Rhizobium radiobacter (Agrobacterium tumefaciens).